The primary structure comprises 104 residues: Iron-sulfur cluster assembly protein CyaY (104 aa).

The protein belongs to the frataxin family.

Involved in iron-sulfur (Fe-S) cluster assembly. May act as a regulator of Fe-S biogenesis. The chain is Iron-sulfur cluster assembly protein CyaY from Rickettsia prowazekii (strain Madrid E).